A 106-amino-acid chain; its full sequence is Ribonuclease P protein component 4 (106 aa).

The Zn(2+) site is built by C57, C60, C83, and C86.

This sequence belongs to the eukaryotic/archaeal RNase P protein component 4 family. In terms of assembly, consists of a catalytic RNA component and at least 4-5 protein subunits. Requires Zn(2+) as cofactor.

The protein localises to the cytoplasm. It catalyses the reaction Endonucleolytic cleavage of RNA, removing 5'-extranucleotides from tRNA precursor.. Functionally, part of ribonuclease P, a protein complex that generates mature tRNA molecules by cleaving their 5'-ends. This Saccharolobus solfataricus (strain ATCC 35092 / DSM 1617 / JCM 11322 / P2) (Sulfolobus solfataricus) protein is Ribonuclease P protein component 4.